Here is a 267-residue protein sequence, read N- to C-terminus: Protein PERCC1 (267 aa).

Disordered stretches follow at residues 19 to 88 (HHPF…QLLR), 142 to 163 (SLEDEDTPEPRVPQGQVCRPGL), and 247 to 267 (ACPELPGRGTPALEGARPAEA). Positions 28 to 50 (EPPETSEEEEEEEEEEEEEEGEG) are enriched in acidic residues. Low complexity predominate over residues 74–83 (PEGPGSPETP).

Functionally, plays a critical role in intestinal function. Acts by promoting the development of enteroendocrine cells (EECs) of the gastrointestinal tract and pancreas. It is thereby required for normal enteroendocrine peptide hormone secretion. This is Protein PERCC1 from Homo sapiens (Human).